A 142-amino-acid polypeptide reads, in one-letter code: Hemoglobin subunit alpha (142 aa).

The Globin domain maps to 2–142 (VLSAADKGHV…VSTVLTSKYR (141 aa)). The residue at position 4 (S4) is a Phosphoserine. Residues K8 and K12 each carry the N6-succinyllysine modification. An N6-acetyllysine; alternate modification is found at K17. An N6-succinyllysine; alternate modification is found at K17. Y25 is subject to Phosphotyrosine. A Phosphoserine modification is found at S36. The residue at position 41 (K41) is an N6-succinyllysine. S50 bears the Phosphoserine mark. Position 59 (H59) interacts with O2. H88 provides a ligand contact to heme b. S103 carries the post-translational modification Phosphoserine. The residue at position 109 (T109) is a Phosphothreonine. S125 carries the post-translational modification Phosphoserine. 2 positions are modified to phosphothreonine: T135 and T138. Phosphoserine is present on S139.

The protein belongs to the globin family. Heterotetramer of two alpha chains and two beta chains. As to expression, red blood cells.

Involved in oxygen transport from the lung to the various peripheral tissues. Its function is as follows. Hemopressin acts as an antagonist peptide of the cannabinoid receptor CNR1. Hemopressin-binding efficiently blocks cannabinoid receptor CNR1 and subsequent signaling. In Notamacropus eugenii (Tammar wallaby), this protein is Hemoglobin subunit alpha (HBA).